The chain runs to 372 residues: Lectin/endochitinase 1 (372 aa).

The signal sequence occupies residues 1 to 23; the sequence is MMMRFLSAVVIMSSAMAVGLVSA. Gln-24 provides a ligand contact to substrate. Gln-24 is modified (pyrrolidone carboxylic acid). Chitin-binding type-1 domains are found at residues 24–64 and 69–111; these read QRCG…KCWS and DHRC…RCSS. Disulfide bonds link Cys-26/Cys-41, Cys-35/Cys-47, Cys-40/Cys-54, and Cys-58/Cys-62. Substrate is bound at residue 42 to 53; it reads SIWGWCGDSEPY. His-70 is a Zn(2+) binding site. Intrachain disulfides connect Cys-72–Cys-87, Cys-81–Cys-93, Cys-86–Cys-100, and Cys-105–Cys-109. His-90 contacts Zn(2+). The spacer stretch occupies residues 113-128; that stretch reads VRGPRVALSGNSTANS. N-linked (GlcNAc...) asparagine glycosylation is present at Asn-123. Positions 129 to 372 are chitinase; sequence IGNVVVTEPL…FQRIQMRVAA (244 aa).

Monomer and homodimer. Zinc favors dimerization. Active in the monomeric form but probably inactive in the dimeric form. The interaction with glycans on the mammalian TCR and MHC molecules of the T-cell and antigen-presenting cell, respectively, is inhibited by oligomers of GlcNAc. Post-translationally, proteolytically processed to yield a very small protein (8.5 kDa, 86 AA) containing only the two chitin-binding domains. As to expression, rhizomes and inflorescence with immature seeds.

It catalyses the reaction Random endo-hydrolysis of N-acetyl-beta-D-glucosaminide (1-&gt;4)-beta-linkages in chitin and chitodextrins.. Functionally, functions both as a chitinase and as a N-acetyl-D-glucosamine binding lectin. Inhibits the growth of several phytopathogenic chitin-containing fungi. Also possesses insecticidal activity and superantigenic properties. In Urtica dioica (Great nettle), this protein is Lectin/endochitinase 1 (UDA1).